Reading from the N-terminus, the 334-residue chain is Ornithine carbamoyltransferase (334 aa).

Carbamoyl phosphate is bound by residues 56–59, Gln-83, Arg-107, and 134–137; these read STRT and HPTQ. Residues Asn-168, Asp-232, and 236–237 each bind L-ornithine; that span reads SM. Residues 274 to 275 and Arg-320 contribute to the carbamoyl phosphate site; that span reads CL.

This sequence belongs to the aspartate/ornithine carbamoyltransferase superfamily. OTCase family.

It is found in the cytoplasm. It catalyses the reaction carbamoyl phosphate + L-ornithine = L-citrulline + phosphate + H(+). Its pathway is amino-acid biosynthesis; L-arginine biosynthesis; L-arginine from L-ornithine and carbamoyl phosphate: step 1/3. Reversibly catalyzes the transfer of the carbamoyl group from carbamoyl phosphate (CP) to the N(epsilon) atom of ornithine (ORN) to produce L-citrulline. The polypeptide is Ornithine carbamoyltransferase (Escherichia coli O45:K1 (strain S88 / ExPEC)).